Here is a 277-residue protein sequence, read N- to C-terminus: Tryptophan synthase alpha chain (277 aa).

Residues Glu-42 and Glu-53 each act as proton acceptor in the active site.

This sequence belongs to the TrpA family. Tetramer of two alpha and two beta chains.

It catalyses the reaction (1S,2R)-1-C-(indol-3-yl)glycerol 3-phosphate + L-serine = D-glyceraldehyde 3-phosphate + L-tryptophan + H2O. It functions in the pathway amino-acid biosynthesis; L-tryptophan biosynthesis; L-tryptophan from chorismate: step 5/5. Functionally, the alpha subunit is responsible for the aldol cleavage of indoleglycerol phosphate to indole and glyceraldehyde 3-phosphate. This chain is Tryptophan synthase alpha chain, found in Natronomonas pharaonis (strain ATCC 35678 / DSM 2160 / CIP 103997 / JCM 8858 / NBRC 14720 / NCIMB 2260 / Gabara) (Halobacterium pharaonis).